Reading from the N-terminus, the 237-residue chain is 7-cyano-7-deazaguanine synthase (237 aa).

Position 10-20 (10-20) interacts with ATP; sequence FSGGQDSTTCL. Zn(2+) is bound by residues Cys189, Cys198, Cys201, and Cys204.

The protein belongs to the QueC family. Requires Zn(2+) as cofactor.

It carries out the reaction 7-carboxy-7-deazaguanine + NH4(+) + ATP = 7-cyano-7-deazaguanine + ADP + phosphate + H2O + H(+). The protein operates within purine metabolism; 7-cyano-7-deazaguanine biosynthesis. Functionally, catalyzes the ATP-dependent conversion of 7-carboxy-7-deazaguanine (CDG) to 7-cyano-7-deazaguanine (preQ(0)). The protein is 7-cyano-7-deazaguanine synthase of Aeromonas salmonicida (strain A449).